Reading from the N-terminus, the 251-residue chain is 5'-nucleotidase SurE (251 aa).

Positions 8, 9, 39, and 95 each coordinate a divalent metal cation.

It belongs to the SurE nucleotidase family. It depends on a divalent metal cation as a cofactor.

It localises to the cytoplasm. It carries out the reaction a ribonucleoside 5'-phosphate + H2O = a ribonucleoside + phosphate. Nucleotidase that shows phosphatase activity on nucleoside 5'-monophosphates. This Ralstonia pickettii (strain 12J) protein is 5'-nucleotidase SurE.